Reading from the N-terminus, the 219-residue chain is Small ribosomal subunit protein uS3 (219 aa).

In terms of domain architecture, KH type-2 spans 39-107 (LRKFLKKKLH…EVLIDIQEVR (69 aa)).

The protein belongs to the universal ribosomal protein uS3 family. In terms of assembly, part of the 30S ribosomal subunit. Forms a tight complex with proteins S10 and S14.

Binds the lower part of the 30S subunit head. Binds mRNA in the 70S ribosome, positioning it for translation. This Desulfatibacillum aliphaticivorans protein is Small ribosomal subunit protein uS3.